Consider the following 405-residue polypeptide: Argininosuccinate synthase (405 aa).

Residues 10–18 (AYSGGVDTS) and alanine 38 each bind ATP. Residue tyrosine 89 participates in L-citrulline binding. Residue glycine 119 participates in ATP binding. Residues threonine 121, asparagine 125, and aspartate 126 each contribute to the L-aspartate site. Asparagine 125 contributes to the L-citrulline binding site. The L-citrulline site is built by arginine 129, serine 177, serine 186, glutamate 262, and tyrosine 274.

This sequence belongs to the argininosuccinate synthase family. Type 1 subfamily. As to quaternary structure, homotetramer.

Its subcellular location is the cytoplasm. It catalyses the reaction L-citrulline + L-aspartate + ATP = 2-(N(omega)-L-arginino)succinate + AMP + diphosphate + H(+). The protein operates within amino-acid biosynthesis; L-arginine biosynthesis; L-arginine from L-ornithine and carbamoyl phosphate: step 2/3. This is Argininosuccinate synthase from Synechococcus sp. (strain RCC307).